The following is a 598-amino-acid chain: Thiol:disulfide interchange protein DsbD (598 aa).

The first 19 residues, 1-19 (MAYRIITLILLLCSTSATA), serve as a signal peptide directing secretion. Residues Cys-122 and Cys-128 are joined by a disulfide bond. Positions 147-187 (DGQATAIEPMPSTSSRPAFNPPLPVEPRPAPELATSPAPAA) are disordered. The span at 165 to 176 (FNPPLPVEPRPA) shows a compositional bias: pro residues. 7 helical membrane-spanning segments follow: residues 197–217 (LPFTALWALLIGIGIAFTPCV), 242–262 (LLAFIYVQGMALTYTALGLVV), 277–297 (YVLVGLSAVFILLALSMFGLF), 330–350 (IAGLICSPCTTAPLSAILLYI), 356–376 (LWLGGGTLYLYALGMGLPLIL), 391–411 (WMSHVKTAFGFVILALPVFLL), and 423–443 (LWSMLGVAFFSWAFITSLGAT). A disulfide bridge connects residues Cys-216 and Cys-338. A Thioredoxin domain is found at 459 to 598 (LVSARPLQDW…FSAHLRDWQA (140 aa)). An intrachain disulfide couples Cys-513 to Cys-516.

This sequence belongs to the thioredoxin family. DsbD subfamily.

It is found in the cell inner membrane. It catalyses the reaction [protein]-dithiol + NAD(+) = [protein]-disulfide + NADH + H(+). The catalysed reaction is [protein]-dithiol + NADP(+) = [protein]-disulfide + NADPH + H(+). Its function is as follows. Required to facilitate the formation of correct disulfide bonds in some periplasmic proteins and for the assembly of the periplasmic c-type cytochromes. Acts by transferring electrons from cytoplasmic thioredoxin to the periplasm. This transfer involves a cascade of disulfide bond formation and reduction steps. The polypeptide is Thiol:disulfide interchange protein DsbD (Klebsiella pneumoniae subsp. pneumoniae (strain ATCC 700721 / MGH 78578)).